The primary structure comprises 384 residues: S-adenosylmethionine synthase (384 aa).

Residue His-15 participates in ATP binding. Residue Asp-17 participates in Mg(2+) binding. K(+) is bound at residue Glu-43. Residues Glu-56 and Gln-99 each coordinate L-methionine. Residues 99 to 109 (QSPDINQGVDR) form a flexible loop region. ATP contacts are provided by residues 164–166 (DAK), 231–232 (RF), Asp-240, 246–247 (RK), Ala-263, and Lys-267. Residue Asp-240 coordinates L-methionine. Lys-271 is an L-methionine binding site.

The protein belongs to the AdoMet synthase family. Homotetramer; dimer of dimers. Mg(2+) is required as a cofactor. It depends on K(+) as a cofactor.

The protein localises to the cytoplasm. It carries out the reaction L-methionine + ATP + H2O = S-adenosyl-L-methionine + phosphate + diphosphate. It participates in amino-acid biosynthesis; S-adenosyl-L-methionine biosynthesis; S-adenosyl-L-methionine from L-methionine: step 1/1. Its function is as follows. Catalyzes the formation of S-adenosylmethionine (AdoMet) from methionine and ATP. The overall synthetic reaction is composed of two sequential steps, AdoMet formation and the subsequent tripolyphosphate hydrolysis which occurs prior to release of AdoMet from the enzyme. The protein is S-adenosylmethionine synthase of Shewanella piezotolerans (strain WP3 / JCM 13877).